Consider the following 84-residue polypeptide: Anaphase-promoting complex subunit 11 (84 aa).

Zn(2+) is bound by residues cysteine 23, cysteine 26, cysteine 34, cysteine 37, cysteine 44, cysteine 51, histidine 53, histidine 56, histidine 58, cysteine 59, cysteine 73, and cysteine 76. The segment at 34 to 77 (CPDCKVPGDDCPLVWGQCSHCFHMHCILKWLNAQQVQQHCPMCR) adopts an RING-type zinc-finger fold.

The protein belongs to the RING-box family. As to quaternary structure, the mammalian APC/C is composed at least of 14 distinct subunits ANAPC1, ANAPC2, CDC27/APC3, ANAPC4, ANAPC5, CDC16/APC6, ANAPC7, CDC23/APC8, ANAPC10, ANAPC11, CDC26/APC12, ANAPC13, ANAPC15 and ANAPC16 that assemble into a complex of at least 19 chains with a combined molecular mass of around 1.2 MDa; APC/C interacts with FZR1 and FBXO5. Interacts with the cullin domain of ANAPC2. Interacts with UBE2D2. Post-translationally, auto-ubiquitinated.

The protein resides in the cytoplasm. It localises to the nucleus. Its pathway is protein modification; protein ubiquitination. Together with the cullin protein ANAPC2, constitutes the catalytic component of the anaphase promoting complex/cyclosome (APC/C), a cell cycle-regulated E3 ubiquitin ligase that controls progression through mitosis and the G1 phase of the cell cycle. The APC/C complex acts by mediating ubiquitination and subsequent degradation of target proteins: it mainly mediates the formation of 'Lys-11'-linked polyubiquitin chains and, to a lower extent, the formation of 'Lys-48'- and 'Lys-63'-linked polyubiquitin chains. The APC/C complex catalyzes assembly of branched 'Lys-11'-/'Lys-48'-linked branched ubiquitin chains on target proteins. May recruit the E2 ubiquitin-conjugating enzymes to the complex. In Mus musculus (Mouse), this protein is Anaphase-promoting complex subunit 11 (Anapc11).